A 205-amino-acid polypeptide reads, in one-letter code: Ribosomal RNA small subunit methyltransferase G (205 aa).

Residues glycine 66, phenylalanine 71, 119–120 (IE), and arginine 135 contribute to the S-adenosyl-L-methionine site.

The protein belongs to the methyltransferase superfamily. RNA methyltransferase RsmG family.

The protein localises to the cytoplasm. The catalysed reaction is guanosine(527) in 16S rRNA + S-adenosyl-L-methionine = N(7)-methylguanosine(527) in 16S rRNA + S-adenosyl-L-homocysteine. Functionally, specifically methylates the N7 position of guanine in position 527 of 16S rRNA. The protein is Ribosomal RNA small subunit methyltransferase G of Rhizobium johnstonii (strain DSM 114642 / LMG 32736 / 3841) (Rhizobium leguminosarum bv. viciae).